The following is a 253-amino-acid chain: Probable glutathione transferase omega-2 (253 aa).

The GST N-terminal domain maps to 25–105 (GIYRIYNMRF…YLDDLFPESR (81 aa)). C35 serves as the catalytic Nucleophile. Glutathione contacts are provided by residues K62, V75, and 89–90 (ES). Residues 110–238 (DPYEKVQQKL…SQPTEMGVGF (129 aa)) enclose the GST C-terminal domain.

The protein belongs to the GST superfamily. Omega family.

The catalysed reaction is RX + glutathione = an S-substituted glutathione + a halide anion + H(+). The enzyme catalyses L-dehydroascorbate + 2 glutathione = glutathione disulfide + L-ascorbate. It carries out the reaction methylarsonate + 2 glutathione + H(+) = methylarsonous acid + glutathione disulfide + H2O. In terms of biological role, exhibits glutathione-dependent thiol transferase activity. Has dehydroascorbate reductase activity and may contribute to the recycling of ascorbic acid. Participates in the biotransformation of inorganic arsenic and reduces monomethylarsonic acid (MMA). The protein is Probable glutathione transferase omega-2 of Caenorhabditis briggsae.